The chain runs to 134 residues: Calvin cycle protein CP12-3, chloroplastic (134 aa).

Positions 1-21 (MISGSATASHGRVLLPSQRER) are disordered. The transit peptide at 1 to 42 (MISGSATASHGRVLLPSQRERRPVSTGSNILRFRETVPRQFS) directs the protein to the chloroplast. Intrachain disulfides connect C78/C87 and C120/C129.

Belongs to the CP12 family. Monomer. Component of a complex that contains two dimers of PRK, two tetramers of GAPDH and CP12. CP12 associates with GAPDH, causing its conformation to change. This GAPDH/CP12 complex binds PRK to form a half-complex (one unit). This unit probably dimerizes due partially to interactions between the enzymes of each unit. In terms of processing, contains two disulfide bonds; only the oxidized protein, with two disulfide bonds, is active in complex formation. The C-terminal disulfide is involved in the interaction with GAPDH and the N-terminal disulfide mediates the binding of PRK with this binary complex. As to expression, mostly expressed, at low levels, in stems and, to a lesser extent, in leaves and roots.

The protein resides in the plastid. It is found in the chloroplast. Acts as a linker essential in the assembly of a core complex of PRK/GAPDH. Coordinates the reversible inactivation of chloroplast enzymes GAPDH and PRK during darkness in photosynthetic tissues. This Arabidopsis thaliana (Mouse-ear cress) protein is Calvin cycle protein CP12-3, chloroplastic (CP12-3).